Consider the following 364-residue polypeptide: Histidinol-phosphate aminotransferase (364 aa).

An N6-(pyridoxal phosphate)lysine modification is found at K226.

The protein belongs to the class-II pyridoxal-phosphate-dependent aminotransferase family. Histidinol-phosphate aminotransferase subfamily. In terms of assembly, homodimer. It depends on pyridoxal 5'-phosphate as a cofactor.

The enzyme catalyses L-histidinol phosphate + 2-oxoglutarate = 3-(imidazol-4-yl)-2-oxopropyl phosphate + L-glutamate. It functions in the pathway amino-acid biosynthesis; L-histidine biosynthesis; L-histidine from 5-phospho-alpha-D-ribose 1-diphosphate: step 7/9. The polypeptide is Histidinol-phosphate aminotransferase (Campylobacter jejuni subsp. jejuni serotype O:23/36 (strain 81-176)).